A 787-amino-acid polypeptide reads, in one-letter code: Protein translocase subunit SecA 2 (787 aa).

ATP is bound by residues Gln-86, 104–108, and Asp-493; that span reads GEGKT.

The protein belongs to the SecA family. As to quaternary structure, monomer and homodimer. Part of the essential Sec protein translocation apparatus which comprises SecA, SecYEG and auxiliary proteins SecDF. Other proteins may also be involved.

The protein resides in the cell membrane. The protein localises to the cytoplasm. The enzyme catalyses ATP + H2O + cellular proteinSide 1 = ADP + phosphate + cellular proteinSide 2.. Part of the Sec protein translocase complex. Interacts with the SecYEG preprotein conducting channel. Has a central role in coupling the hydrolysis of ATP to the transfer of proteins into and across the cell membrane, serving as an ATP-driven molecular motor driving the stepwise translocation of polypeptide chains across the membrane. The chain is Protein translocase subunit SecA 2 from Bacillus thuringiensis subsp. konkukian (strain 97-27).